Here is a 423-residue protein sequence, read N- to C-terminus: Glucose-1-phosphate adenylyltransferase 1 (423 aa).

Alpha-D-glucose 1-phosphate contacts are provided by residues Tyr-111, Gly-176, 191 to 192 (EK), and Ser-209.

This sequence belongs to the bacterial/plant glucose-1-phosphate adenylyltransferase family. In terms of assembly, homotetramer.

The enzyme catalyses alpha-D-glucose 1-phosphate + ATP + H(+) = ADP-alpha-D-glucose + diphosphate. It participates in glycan biosynthesis; glycogen biosynthesis. In terms of biological role, involved in the biosynthesis of ADP-glucose, a building block required for the elongation reactions to produce glycogen. Catalyzes the reaction between ATP and alpha-D-glucose 1-phosphate (G1P) to produce pyrophosphate and ADP-Glc. This is Glucose-1-phosphate adenylyltransferase 1 from Alkalilimnicola ehrlichii (strain ATCC BAA-1101 / DSM 17681 / MLHE-1).